The following is a 147-amino-acid chain: Anti-sigma F factor (147 aa).

Belongs to the anti-sigma-factor family.

It catalyses the reaction L-seryl-[protein] + ATP = O-phospho-L-seryl-[protein] + ADP + H(+). The catalysed reaction is L-threonyl-[protein] + ATP = O-phospho-L-threonyl-[protein] + ADP + H(+). Functionally, binds to sigma F and blocks its ability to form an RNA polymerase holoenzyme (E-sigma F). Phosphorylates SpoIIAA on a serine residue. This phosphorylation may enable SpoIIAA to act as an anti-anti-sigma factor that counteracts SpoIIAB and thus releases sigma F from inhibition. This is Anti-sigma F factor from Heyndrickxia coagulans (Weizmannia coagulans).